Reading from the N-terminus, the 111-residue chain is Cytochrome c (111 aa).

Alanine 1 carries the post-translational modification N-acetylalanine. Heme c is bound by residues cysteine 22, cysteine 25, and histidine 26. Position 80 is an N6,N6,N6-trimethyllysine (lysine 80). Methionine 88 is a binding site for heme c. Position 94 is an N6,N6,N6-trimethyllysine (lysine 94).

This sequence belongs to the cytochrome c family. In terms of processing, binds 1 heme c group covalently per subunit.

Its subcellular location is the mitochondrion intermembrane space. Functionally, electron carrier protein. The oxidized form of the cytochrome c heme group can accept an electron from the heme group of the cytochrome c1 subunit of cytochrome reductase. Cytochrome c then transfers this electron to the cytochrome oxidase complex, the final protein carrier in the mitochondrial electron-transport chain. The chain is Cytochrome c from Cucurbita maxima (Pumpkin).